A 234-amino-acid polypeptide reads, in one-letter code: Carbohydrate deacetylase (234 aa).

Mg(2+) is bound by residues His60 and His123.

This sequence belongs to the YdjC deacetylase family. The cofactor is Mg(2+).

Its function is as follows. Probably catalyzes the deacetylation of acetylated carbohydrates an important step in the degradation of oligosaccharides. This is Carbohydrate deacetylase from Bacillus anthracis.